Here is an 871-residue protein sequence, read N- to C-terminus: Nonsense-mediated mRNA decay factor SMG8 (871 aa).

The interval 541–596 is disordered; the sequence is LDDMELPESLQQSYTSSEDSSEDDDDFAIQTASSEDSLSGSDSYARPGSRRDEFES. Residues 573–583 are compositionally biased toward low complexity; it reads SSEDSLSGSDS.

This sequence belongs to the SMG8 family.

In terms of biological role, involved in nonsense-mediated decay (NMD) of mRNAs containing premature stop codons. Probable component of kinase complex containing smg-1 and recruited to stalled ribosomes. This is Nonsense-mediated mRNA decay factor SMG8 (smg-8) from Caenorhabditis briggsae.